A 376-amino-acid chain; its full sequence is General transcription factor IIH subunit 2 (376 aa).

The 143-residue stretch at 64–206 (HVMIVIDCSR…NIRCSAIGLS (143 aa)) folds into the VWFA domain. A C4-type zinc finger spans residues 286-303 (CTQCGARHCSIPAECPVC).

Belongs to the GTF2H2 family. As to quaternary structure, component of the 7-subunit TFIIH core complex composed of xpb-1, xpd-1, gtf-2H1, gtf-2H2C, gtf-2H3, Y73F8A.24 and gtf-2H5, which is active in NER. The core complex associates with the 3-subunit CDK-activating kinase (CAK) module composed of cyh-1, cdk-7 and mnat-1 to form the 10-subunit holoenzyme (holo-TFIIH) active in transcription.

It is found in the nucleus. Functionally, component of the general transcription and DNA repair factor IIH (TFIIH) core complex, which is involved in general and transcription-coupled nucleotide excision repair (NER) of damaged DNA and, when complexed to CAK, in RNA transcription by RNA polymerase II. In NER, TFIIH acts by opening DNA around the lesion to allow the excision of the damaged oligonucleotide and its replacement by a new DNA fragment. In transcription, TFIIH has an essential role in transcription initiation. When the pre-initiation complex (PIC) has been established, TFIIH is required for promoter opening and promoter escape. Phosphorylation of the C-terminal tail (CTD) of the largest subunit of RNA polymerase II by the kinase module CAK controls the initiation of transcription. The chain is General transcription factor IIH subunit 2 from Caenorhabditis elegans.